A 198-amino-acid polypeptide reads, in one-letter code: Probable GTP-binding protein EngB (198 aa).

Positions 21–195 constitute an EngB-type G domain; it reads NFSEVAFLGR…EDIIINQTLG (175 aa). Residues 29 to 36, 56 to 60, 81 to 84, 151 to 154, and 174 to 176 contribute to the GTP site; these read GRSNVGKS, GKTQL, DLPG, TKCD, and VSN. Mg(2+)-binding residues include serine 36 and threonine 58.

This sequence belongs to the TRAFAC class TrmE-Era-EngA-EngB-Septin-like GTPase superfamily. EngB GTPase family. Mg(2+) serves as cofactor.

Functionally, necessary for normal cell division and for the maintenance of normal septation. In Campylobacter jejuni (strain RM1221), this protein is Probable GTP-binding protein EngB.